The sequence spans 652 residues: Threonine--tRNA ligase (652 aa).

The 64-residue stretch at 1-64 (MPDVIRITFP…HEDGELVIIT (64 aa)) folds into the TGS domain. The tract at residues 245-542 (DHRKLGKELE…LIEEYKGAFP (298 aa)) is catalytic. Zn(2+)-binding residues include cysteine 338, histidine 389, and histidine 519.

It belongs to the class-II aminoacyl-tRNA synthetase family. Homodimer. Requires Zn(2+) as cofactor.

The protein resides in the cytoplasm. It carries out the reaction tRNA(Thr) + L-threonine + ATP = L-threonyl-tRNA(Thr) + AMP + diphosphate + H(+). Functionally, catalyzes the attachment of threonine to tRNA(Thr) in a two-step reaction: L-threonine is first activated by ATP to form Thr-AMP and then transferred to the acceptor end of tRNA(Thr). Also edits incorrectly charged L-seryl-tRNA(Thr). The chain is Threonine--tRNA ligase from Geobacillus kaustophilus (strain HTA426).